Here is a 367-residue protein sequence, read N- to C-terminus: Flagellar P-ring protein (367 aa).

A signal peptide spans 1–21 (MKIIQTFFIITLLWLSQGVQA).

The protein belongs to the FlgI family. As to quaternary structure, the basal body constitutes a major portion of the flagellar organelle and consists of four rings (L,P,S, and M) mounted on a central rod.

Its subcellular location is the periplasm. It is found in the bacterial flagellum basal body. Its function is as follows. Assembles around the rod to form the L-ring and probably protects the motor/basal body from shearing forces during rotation. The protein is Flagellar P-ring protein of Nitrosococcus oceani (strain ATCC 19707 / BCRC 17464 / JCM 30415 / NCIMB 11848 / C-107).